The following is a 463-amino-acid chain: MAANISLQPTSMRDVTKMERIGVHSHIHGLGLDSNLEPRASSQGMIGQGKARKAAGVILKMVQEGRIAGRAILMAGPPSTGKTALAMAMTQTLGSDVPFVMLTASEVFSLEISKTESLTQAFRRAIGVRIKEETELIEGEVVEIQVDRSVTGATKTGRLTLKTTDMETVYDLGSKMIDQLQKEKVLAGDVVSIDKASGRISKLGRSFGRAKDYDAMGADTRFVACPDGELQTRKEVVHTVSLHEIDVINSRTQGFLALFAGDTGEIKPELRAQINGKVAEWREEGKAEIVPGVLFIDEVHMLDIECFSFLNRAMENELAPLVVMASNRGITRIRGTKYKSPHGIPADLLDRMLIISTNRYEEDEMREIVKIRAEEEDVRLSPAALDLLATMGIQTSLRYSLNLIAPSSLLAQRRKSPQTDVEDVRMAYKYFCDVERSAQYAKETSGMMFGETEEINGGMEVDA.

76 to 83 (GPPSTGKT) contacts ATP.

It belongs to the RuvB family. As to quaternary structure, may form heterododecamers with RVB1. Component of the SWR1 chromatin remodeling complex, the INO80 chromatin remodeling complex, and of the R2TP complex.

The protein resides in the nucleus. The catalysed reaction is ATP + H2O = ADP + phosphate + H(+). DNA helicase which participates in several chromatin remodeling complexes, including the SWR1 and the INO80 complexes. The SWR1 complex mediates the ATP-dependent exchange of histone H2A for the H2A variant HZT1 leading to transcriptional regulation of selected genes by chromatin remodeling. The INO80 complex remodels chromatin by shifting nucleosomes and is involved in DNA repair. Also involved in pre-rRNA processing. This is RuvB-like helicase 2 (RVB2) from Cryptococcus neoformans var. neoformans serotype D (strain JEC21 / ATCC MYA-565) (Filobasidiella neoformans).